Reading from the N-terminus, the 513-residue chain is MEAIISFAGIGINYKKLQSKLQHNFGRLLKALTVTARALPGQPKHIAIRQETAFTLQGEYIYFPILLRKQFEMFNMVYTAHPVSLRALPCVETEFPLFNYQQEMVDKIHKKLLSPYGRFYLHLNTGLGKTRIAISIIQKLLYPTLVIVPTKAIQIQWIDELTLLLPHLRVAAYNNAACKKKDMTSKEYDVIVGIINTLRKKPEQFFEPFGLVVLDEAHELHSPENYKIFWKIQLSRILGLSATPLDRPDGMDKIIIHHLGQPQRTVSPTTTFSGYVREIEYQGHPDFVSPVCINEKVSAIATIDKLLQDPSRIQLVVNEAKRLYSLHTAEPHKWGTDEPYGIIIFVEFRKLLEIFYQALSKEFKDVQIIVPEVALLCGGVSNTALSQAHSASIILLTYGYGRRGISFKHMTSIIMATPRRNNMEQILGRITRQGSDEKKVRIVVDIKDTLSPLSSQVYDRHRIYKKKGYPIFKCSASYQQPYSSNEVLIWDPYNESCLACTTTPPSPSKQKHT.

Residues 110–262 enclose the Helicase ATP-binding domain; it reads KKLLSPYGRF…KIIIHHLGQP (153 aa). 123-130 provides a ligand contact to ATP; the sequence is LNTGLGKT. The DEAH box signature appears at 215–218; the sequence is DEAH.

It belongs to the DEAD box helicase family. DEAH subfamily.

It carries out the reaction ATP + H2O = ADP + phosphate + H(+). This Ornithodoros (relapsing fever ticks) protein is Putative ATP-dependent RNA helicase QP509L.